The following is a 151-amino-acid chain: Transcriptional regulator MraZ (151 aa).

2 SpoVT-AbrB domains span residues 5–52 and 81–124; these read ANAI…PLDE and AVDL…DEDA.

It belongs to the MraZ family. Forms oligomers.

The protein localises to the cytoplasm. It is found in the nucleoid. In Pseudomonas fluorescens (strain Pf0-1), this protein is Transcriptional regulator MraZ.